We begin with the raw amino-acid sequence, 147 residues long: Nucleoside diphosphate kinase (147 aa).

ATP-binding residues include Lys9, Phe57, Arg85, Thr91, Arg102, and Asn112. Catalysis depends on His115, which acts as the Pros-phosphohistidine intermediate.

It belongs to the NDK family. Homotetramer. The cofactor is Mg(2+).

Its subcellular location is the cytoplasm. The catalysed reaction is a 2'-deoxyribonucleoside 5'-diphosphate + ATP = a 2'-deoxyribonucleoside 5'-triphosphate + ADP. It carries out the reaction a ribonucleoside 5'-diphosphate + ATP = a ribonucleoside 5'-triphosphate + ADP. Its function is as follows. Major role in the synthesis of nucleoside triphosphates other than ATP. The ATP gamma phosphate is transferred to the NDP beta phosphate via a ping-pong mechanism, using a phosphorylated active-site intermediate. This is Nucleoside diphosphate kinase from Kosmotoga olearia (strain ATCC BAA-1733 / DSM 21960 / TBF 19.5.1).